The following is a 202-amino-acid chain: Alpha-1-acid glycoprotein (202 aa).

An N-terminal signal peptide occupies residues 1-18 (MALLWALAVLSHLPLLDA). Residues Asn-34, Asn-57, Asn-94, Asn-104, and Asn-136 are each glycosylated (N-linked (GlcNAc...) asparagine). Cysteines 91 and 184 form a disulfide.

It belongs to the calycin superfamily. Lipocalin family.

It localises to the secreted. Its function is as follows. Functions as a transport protein in the blood stream. Binds various ligands in the interior of its beta-barrel domain. Appears to function in modulating the activity of the immune system during the acute-phase reaction. The protein is Alpha-1-acid glycoprotein (ORM1) of Bos taurus (Bovine).